A 679-amino-acid polypeptide reads, in one-letter code: DNA ligase (679 aa).

Residues 86-90 (DEAYD) and 129-130 (ST) contribute to the NAD(+) site. The active-site N6-AMP-lysine intermediate is lysine 167. The NAD(+) site is built by arginine 183, glutamate 214, and lysine 326. 4 residues coordinate Zn(2+): cysteine 417, cysteine 420, cysteine 433, and cysteine 439. The BRCT domain occupies 599–679 (GEKSPISGKT…EAYRQLVSLD (81 aa)).

This sequence belongs to the NAD-dependent DNA ligase family. LigA subfamily. It depends on Mg(2+) as a cofactor. Mn(2+) is required as a cofactor.

The catalysed reaction is NAD(+) + (deoxyribonucleotide)n-3'-hydroxyl + 5'-phospho-(deoxyribonucleotide)m = (deoxyribonucleotide)n+m + AMP + beta-nicotinamide D-nucleotide.. DNA ligase that catalyzes the formation of phosphodiester linkages between 5'-phosphoryl and 3'-hydroxyl groups in double-stranded DNA using NAD as a coenzyme and as the energy source for the reaction. It is essential for DNA replication and repair of damaged DNA. The sequence is that of DNA ligase from Desulfotalea psychrophila (strain LSv54 / DSM 12343).